Here is a 392-residue protein sequence, read N- to C-terminus: Chalcone synthase 1 (392 aa).

Cysteine 167 is a catalytic residue.

Belongs to the thiolase-like superfamily. Chalcone/stilbene synthases family.

The catalysed reaction is (E)-4-coumaroyl-CoA + 3 malonyl-CoA + 3 H(+) = 2',4,4',6'-tetrahydroxychalcone + 3 CO2 + 4 CoA. It functions in the pathway secondary metabolite biosynthesis; flavonoid biosynthesis. Functionally, the primary product of this enzyme is 4,2',4',6'-tetrahydroxychalcone (also termed naringenin-chalcone or chalcone) which can under specific conditions spontaneously isomerize into naringenin. This chain is Chalcone synthase 1 (CHS1), found in Secale cereale (Rye).